A 101-amino-acid chain; its full sequence is Small ribosomal subunit protein bS18c (101 aa).

Belongs to the bacterial ribosomal protein bS18 family. As to quaternary structure, part of the 30S ribosomal subunit.

The protein resides in the plastid. It is found in the chloroplast. The sequence is that of Small ribosomal subunit protein bS18c from Nymphaea alba (White water-lily).